The sequence spans 866 residues: Dimethylglycine dehydrogenase, mitochondrial (866 aa).

The N-terminal 50 residues, 1–50, are a transit peptide targeting the mitochondrion; the sequence is MLRPGAQLLRGLLLRSCPLQGSPGRPRSVCGREGEEKPPLSAETQWKDRA. Residues 20-42 are disordered; it reads QGSPGRPRSVCGREGEEKPPLSA. FAD is bound by residues 59-60, 80-81, and 87-95; these read CV, EK, and GSTWHAAGL. Residue His-91 is modified to Tele-8alpha-FAD histidine. Lys-114 is modified (N6-acetyllysine). Lys-148 bears the N6-acetyllysine; alternate mark. An N6-succinyllysine; alternate modification is found at Lys-148. Residue Lys-168 is modified to N6-acetyllysine. An FAD-binding site is contributed by Val-219. An N6-acetyllysine modification is found at Lys-223. Trp-251 is a binding site for FAD. 2 positions are modified to N6-succinyllysine: Lys-317 and Lys-319. N6-acetyllysine occurs at positions 335 and 360. 397 to 402 contributes to the FAD binding site; it reads FGYGII. Lys-434 and Lys-523 each carry N6-acetyllysine; alternate. Lys-434 and Lys-523 each carry N6-succinyllysine; alternate. A (6S)-5,6,7,8-tetrahydrofolate-binding site is contributed by 580 to 582; it reads ELT. Lys-655 is subject to N6-acetyllysine; alternate. Lys-655 carries the post-translational modification N6-succinyllysine; alternate. Residues Tyr-676, 683-685, and Tyr-744 each bind (6S)-5,6,7,8-tetrahydrofolate; that span reads ELY. Lys-764 carries the N6-acetyllysine modification. Position 795 is an N6-succinyllysine (Lys-795).

It belongs to the GcvT family. In terms of assembly, monomer. The cofactor is FAD.

It localises to the mitochondrion. The catalysed reaction is (6S)-5,6,7,8-tetrahydrofolyl-(gamma-L-Glu)(n) + N,N-dimethylglycine + oxidized [electron-transfer flavoprotein] + H(+) = (6R)-5,10-methylenetetrahydrofolyl-(gamma-L-Glu)(n) + sarcosine + reduced [electron-transfer flavoprotein]. It participates in amine and polyamine degradation; betaine degradation; sarcosine from betaine: step 2/2. In terms of biological role, catalyzes the demethylation of N,N-dimethylglycine to sarcosine. Also has activity with sarcosine in vitro. The sequence is that of Dimethylglycine dehydrogenase, mitochondrial (DMGDH) from Homo sapiens (Human).